We begin with the raw amino-acid sequence, 223 residues long: 7-cyano-7-deazaguanine synthase (223 aa).

8 to 18 is an ATP binding site; sequence MSGGMDSTLCA. 4 residues coordinate Zn(2+): cysteine 187, cysteine 195, cysteine 198, and cysteine 201.

It belongs to the QueC family. Requires Zn(2+) as cofactor.

The catalysed reaction is 7-carboxy-7-deazaguanine + NH4(+) + ATP = 7-cyano-7-deazaguanine + ADP + phosphate + H2O + H(+). The protein operates within purine metabolism; 7-cyano-7-deazaguanine biosynthesis. Functionally, catalyzes the ATP-dependent conversion of 7-carboxy-7-deazaguanine (CDG) to 7-cyano-7-deazaguanine (preQ(0)). This is 7-cyano-7-deazaguanine synthase from Campylobacter curvus (strain 525.92).